A 354-amino-acid chain; its full sequence is Uroporphyrinogen decarboxylase (354 aa).

Substrate contacts are provided by residues 27-31 (RQAGR), Asp77, Tyr154, Thr209, and His327.

Belongs to the uroporphyrinogen decarboxylase family. As to quaternary structure, homodimer.

The protein resides in the cytoplasm. It catalyses the reaction uroporphyrinogen III + 4 H(+) = coproporphyrinogen III + 4 CO2. It functions in the pathway porphyrin-containing compound metabolism; protoporphyrin-IX biosynthesis; coproporphyrinogen-III from 5-aminolevulinate: step 4/4. Functionally, catalyzes the decarboxylation of four acetate groups of uroporphyrinogen-III to yield coproporphyrinogen-III. This chain is Uroporphyrinogen decarboxylase, found in Pseudomonas putida (strain GB-1).